A 425-amino-acid polypeptide reads, in one-letter code: Serine--tRNA ligase (425 aa).

228 to 230 (TAE) is an L-serine binding site. 259–261 (RSE) lines the ATP pocket. Position 282 (E282) interacts with L-serine. 346–349 (EIAS) contributes to the ATP binding site. An L-serine-binding site is contributed by S382.

This sequence belongs to the class-II aminoacyl-tRNA synthetase family. Type-1 seryl-tRNA synthetase subfamily. Homodimer. The tRNA molecule binds across the dimer.

Its subcellular location is the cytoplasm. The enzyme catalyses tRNA(Ser) + L-serine + ATP = L-seryl-tRNA(Ser) + AMP + diphosphate + H(+). It carries out the reaction tRNA(Sec) + L-serine + ATP = L-seryl-tRNA(Sec) + AMP + diphosphate + H(+). It functions in the pathway aminoacyl-tRNA biosynthesis; selenocysteinyl-tRNA(Sec) biosynthesis; L-seryl-tRNA(Sec) from L-serine and tRNA(Sec): step 1/1. Functionally, catalyzes the attachment of serine to tRNA(Ser). Is also able to aminoacylate tRNA(Sec) with serine, to form the misacylated tRNA L-seryl-tRNA(Sec), which will be further converted into selenocysteinyl-tRNA(Sec). In Rickettsia canadensis (strain McKiel), this protein is Serine--tRNA ligase.